A 186-amino-acid chain; its full sequence is Probable RNA 2'-phosphotransferase (186 aa).

Belongs to the KptA/TPT1 family.

Functionally, removes the 2'-phosphate from RNA via an intermediate in which the phosphate is ADP-ribosylated by NAD followed by a presumed transesterification to release the RNA and generate ADP-ribose 1''-2''-cyclic phosphate (APPR&gt;P). May function as an ADP-ribosylase. The protein is Probable RNA 2'-phosphotransferase of Hahella chejuensis (strain KCTC 2396).